The primary structure comprises 724 residues: Pesticidal crystal protein Cry11Ba (724 aa).

The protein belongs to the delta endotoxin family.

Functionally, promotes colloidosmotic lysis by binding to the midgut epithelial cells of mosquitos. Active on Aedes aegypti, Culex pipiens and Anopheles stephensi larvae. The protein is Pesticidal crystal protein Cry11Ba (cry11Ba) of Bacillus thuringiensis subsp. jegathesan.